We begin with the raw amino-acid sequence, 174 residues long: MEGTTVIAVRHQGRVALAGDGQVTFGNTVMKHKARKVRRLYQDRVLAGFAGSVADAFTLFEKFEAKLETYHGNLQRAAVELGKEWRTDRFLRRLEALLVVADKEHLLIISGNGEIVEPDDGIAAIGSGGPYALAAARALVAHTSMTAGEIAREAMNIAASICIYTNNNIIVEEL.

The active site involves Thr4. Residues Ala159, Cys162, and Thr165 each coordinate Na(+).

This sequence belongs to the peptidase T1B family. HslV subfamily. A double ring-shaped homohexamer of HslV is capped on each side by a ring-shaped HslU homohexamer. The assembly of the HslU/HslV complex is dependent on binding of ATP.

It is found in the cytoplasm. It carries out the reaction ATP-dependent cleavage of peptide bonds with broad specificity.. Its activity is regulated as follows. Allosterically activated by HslU binding. In terms of biological role, protease subunit of a proteasome-like degradation complex believed to be a general protein degrading machinery. The sequence is that of ATP-dependent protease subunit HslV from Moorella thermoacetica (strain ATCC 39073 / JCM 9320).